A 470-amino-acid chain; its full sequence is Pyruvate kinase I (470 aa).

Substrate is bound at residue arginine 32. Residues asparagine 34, serine 36, aspartate 66, and threonine 67 each contribute to the K(+) site. 34–37 (NFSH) lines the ATP pocket. The ATP site is built by arginine 73 and lysine 156. Glutamate 222 contributes to the Mg(2+) binding site. Positions 245, 246, and 278 each coordinate substrate. Aspartate 246 is a Mg(2+) binding site.

The protein belongs to the pyruvate kinase family. Homotetramer. Requires Mg(2+) as cofactor. It depends on K(+) as a cofactor.

The enzyme catalyses pyruvate + ATP = phosphoenolpyruvate + ADP + H(+). Its pathway is carbohydrate degradation; glycolysis; pyruvate from D-glyceraldehyde 3-phosphate: step 5/5. This chain is Pyruvate kinase I (pykF), found in Salmonella typhi.